We begin with the raw amino-acid sequence, 588 residues long: MATSLNLSSIFSSSSRLVTTPSSVFPIRQRRRIILVTSSSSGGGGKPTILVTEKLGQAGIDLLKKYANVDCSYDLSLEELCTKISLCDALIVRSGTKVGRDVFESSRGRLKVVGRAGVGIDNVDLAAATEYGCLVVNAPTANTVAAAEHGIALLTAMARNIAQADASIKAGKWTRNKYVGVSLVGKTLAVLGFGKVGSEVARRARGLGMHVITHDPYAPADRARAIGVELVSFEVAISTADFISLHLPLTAATSKMMNDVTFAMMKKGVRIVNVARGGVIDEEALLRALDSGIVAQAALDVFTVEPPVKDNKLVLHESVTATPHLGASTMEAQEGVSIEVAEAVIGALRGELAATAVNAPMVPLEVLRELKPYVVLAEKLGRLAVQLVTGGSGVNAVKVTYASSRAPDDLDTRLLRAMVIKGIIEPISSVFINLVNSDYIAKQRGVKISEERMVLDGSPENPIEYITVRIANVESRFASALSESGEIKVEGRVKQGVPSLTKVGLFGVDVSLEGSVILCRQVDQPGMIGKVASILGDENVNVSFMSVGRIAPGKQAVMAIGVDEQPSKETLKKIGDIPAIEEFVFLKL.

A chloroplast-targeting transit peptide spans 1 to 38 (MATSLNLSSIFSSSSRLVTTPSSVFPIRQRRRIILVTS). NAD(+) is bound by residues 195 to 196 (KV), Asp215, 274 to 276 (VAR), and Asp300. Arg276 is an active-site residue. Glu305 is a catalytic residue. Catalysis depends on His324, which acts as the Proton donor. 324–327 (HLGA) is an NAD(+) binding site. Residues 516–588 (VILCRQVDQP…AIEEFVFLKL (73 aa)) enclose the ACT domain.

This sequence belongs to the D-isomer specific 2-hydroxyacid dehydrogenase family. As to expression, expressed in aerial parts. Not detected in roots and meristematic tissue. Expressed in cotyledons, adult leaves, stigma and anther filaments. Detected in the embryo.

The protein localises to the plastid. It is found in the chloroplast. It carries out the reaction (2R)-3-phosphoglycerate + NAD(+) = 3-phosphooxypyruvate + NADH + H(+). It functions in the pathway amino-acid biosynthesis; L-serine biosynthesis; L-serine from 3-phospho-D-glycerate: step 1/3. Its activity is regulated as follows. Partially inhibited by 1 mM serine. Involved in the plastidial phosphorylated pathway of serine biosynthesis (PPSB). The protein is D-3-phosphoglycerate dehydrogenase 3, chloroplastic (PGDH3) of Arabidopsis thaliana (Mouse-ear cress).